We begin with the raw amino-acid sequence, 187 residues long: Ion-translocating oxidoreductase complex subunit B (187 aa).

Residues 1 to 26 (MTHILFAVLVLALLALAFGIILGFAA) form a hydrophobic region. A 4Fe-4S domain is found at 32–90 (EADPIVDQLDALLPQTQCGQCGYPGCKPYAEALANGDQINKCVPGGDATMRKIADLMGV). Positions 49, 52, 57, 73, 115, 118, 121, 125, 145, 148, 151, and 155 each coordinate [4Fe-4S] cluster. 4Fe-4S ferredoxin-type domains follow at residues 106–135 (KVAF…GATK) and 136–165 (AMHT…MIPV).

It belongs to the 4Fe4S bacterial-type ferredoxin family. RnfB subfamily. As to quaternary structure, the complex is composed of six subunits: RnfA, RnfB, RnfC, RnfD, RnfE and RnfG. The cofactor is [4Fe-4S] cluster.

Its subcellular location is the cell inner membrane. In terms of biological role, part of a membrane-bound complex that couples electron transfer with translocation of ions across the membrane. In Aeromonas salmonicida (strain A449), this protein is Ion-translocating oxidoreductase complex subunit B.